The following is an 806-amino-acid chain: Mitogen-activated protein kinase 7 (806 aa).

The disordered stretch occupies residues 1 to 23; the sequence is MAEPLKEEDGEDGSGEPPGRVKA. Ala-2 carries the N-acetylalanine modification. A required for cytoplasmic targeting region spans residues 2–77; sequence AEPLKEEDGE…VVSSARRRLT (76 aa). A Protein kinase domain is found at 55–347; it reads YEIIETIGNG…AAAALRHPFL (293 aa). ATP is bound by residues 61-69 and Lys-84; that span reads IGNGAYGVV. A required for binding to MAP2K5 region spans residues 78-139; that stretch reads GQQVAIKKIP…FRSVYVVLDL (62 aa). The necessary for oligomerization stretch occupies residues 140-406; it reads MESDLHQIIH…QQIRFQPSLQ (267 aa). The active-site Proton acceptor is Asp-182. A TXY motif is present at residues 219 to 221; sequence TEY. Residues 407–806 are may not be required for kinase activity; required to stimulate MEF2C activity; that stretch reads PVASEPVCPD…LSDLPDLQEP (400 aa). 2 disordered regions span residues 424 to 473 and 488 to 727; these read APSG…AISD and RSRL…PKGS. Over residues 433-443 the composition is skewed to pro residues; that stretch reads SPPPALPPCSD. 3 stretches are compositionally biased toward basic and acidic residues: residues 502–519, 527–544, and 563–573; these read PEPR…EREE, RAKE…KERG, and DNDRSLLERWT. A Nuclear localization signal motif is present at residues 505 to 539; that stretch reads RKPVTAQERQREREEKRRRRQERAKEREKRRQERE. Residues 578–592 are compositionally biased toward pro residues; the sequence is PPAPAPAPAPAPAPA. The segment covering 593-603 has biased composition (low complexity); that stretch reads PSSAQPTSTPT. Residues 627–643 show a composition bias toward pro residues; it reads VCPPPGPVPQPAGPIPA. Positions 647 to 660 are enriched in polar residues; the sequence is TAPSTSLLASQSLV. The segment covering 678 to 689 has biased composition (pro residues); the sequence is PSGPPPPDPGLT. Residues 693-710 show a composition bias toward polar residues; the sequence is STSESPDVNLVTQQLSKS. At Ser-710 the chain carries Phosphoserine. The residue at position 723 (Thr-723) is a Phosphothreonine.

The protein belongs to the protein kinase superfamily. CMGC Ser/Thr protein kinase family. MAP kinase subfamily. Interacts with MAP2K5. Forms oligomers. Interacts with MEF2A, MEF2C and MEF2D; the interaction phosphorylates the MEF2s and enhances transcriptional activity of MEF2A, MEF2C but not MEF2D. Interacts with SGK1. Interacts with PML. Interacts (via N-terminal half) with HSP90AB1-CDC37 chaperone complex in resting cells; the interaction is MAP2K5-independent and prevents MAPK7 from ubiquitination and proteasomal degradation. Interacts with STUB1/CHIP; the interaction is enhanced in the presence of IGF1 or MAP2K5 and promotes STUB1/CHIP E3 ligase activity. Mg(2+) is required as a cofactor. Dually phosphorylated on Thr-219 and Tyr-221, which activates the enzyme. In terms of tissue distribution, detected in testis, brain, kidney, lung and heart. Detected in total embryo (at protein level).

It localises to the cytoplasm. The protein localises to the nucleus. It is found in the PML body. It catalyses the reaction L-seryl-[protein] + ATP = O-phospho-L-seryl-[protein] + ADP + H(+). It carries out the reaction L-threonyl-[protein] + ATP = O-phospho-L-threonyl-[protein] + ADP + H(+). Its activity is regulated as follows. Activated by tyrosine and threonine phosphorylation. Activated in response to hyperosmolarity, hydrogen peroxide, and epidermal growth factor (EGF). Functionally, plays a role in various cellular processes such as proliferation, differentiation and cell survival. The upstream activator of MAPK7 is the MAPK kinase MAP2K5. Upon activation, it translocates to the nucleus and phosphorylates various downstream targets including MEF2C. EGF activates MAPK7 through a Ras-independent and MAP2K5-dependent pathway. As part of the MAPK/ERK signaling pathway, acts as a negative regulator of apoptosis in cardiomyocytes via interaction with STUB1/CHIP and promotion of STUB1-mediated ubiquitination and degradation of ICER-type isoforms of CREM. May have a role in muscle cell differentiation. May be important for endothelial function and maintenance of blood vessel integrity. MAP2K5 and MAPK7 interact specifically with one another and not with MEK1/ERK1 or MEK2/ERK2 pathways. Phosphorylates SGK1 at Ser-78 and this is required for growth factor-induced cell cycle progression. Involved in the regulation of p53/TP53 by disrupting the PML-MDM2 interaction. The chain is Mitogen-activated protein kinase 7 (Mapk7) from Mus musculus (Mouse).